The chain runs to 944 residues: Isoleucine--tRNA ligase (944 aa).

The 'HIGH' region signature appears at 58–68 (PYANGSIHIGH). An L-isoleucyl-5'-AMP-binding site is contributed by Glu563. The 'KMSKS' region motif lies at 604–608 (KMSKS). Lys607 serves as a coordination point for ATP. Zn(2+) is bound by residues Cys907, Cys910, Cys927, and Cys930.

The protein belongs to the class-I aminoacyl-tRNA synthetase family. IleS type 1 subfamily. In terms of assembly, monomer. Requires Zn(2+) as cofactor.

The protein resides in the cytoplasm. It carries out the reaction tRNA(Ile) + L-isoleucine + ATP = L-isoleucyl-tRNA(Ile) + AMP + diphosphate. Catalyzes the attachment of isoleucine to tRNA(Ile). As IleRS can inadvertently accommodate and process structurally similar amino acids such as valine, to avoid such errors it has two additional distinct tRNA(Ile)-dependent editing activities. One activity is designated as 'pretransfer' editing and involves the hydrolysis of activated Val-AMP. The other activity is designated 'posttransfer' editing and involves deacylation of mischarged Val-tRNA(Ile). This chain is Isoleucine--tRNA ligase, found in Salmonella paratyphi A (strain ATCC 9150 / SARB42).